The chain runs to 257 residues: Staphylococcal secretory antigen SsaA (257 aa).

The N-terminal stretch at 1-26 (MKKIATATIATAGIATFAFAHHDAQA) is a signal peptide. Tandem repeats lie at residues 73 to 75 (YNN), 76 to 78 (YNN), 84 to 86 (YNN), 87 to 89 (YSN), 90 to 92 (YNN), 93 to 95 (YSN), 96 to 98 (YNN), and 99 to 101 (YNN). The tract at residues 73–101 (YNNYNNYNYYGYNNYSNYNNYSNYNNYNN) is 8 X 3 AA repeats of Y-[NS]-N. Positions 101–144 (NYQSNNTQSQRTTQPTGGLGASYSTSSSNVHVTTTSAPSSNGVS) are disordered. Polar residues predominate over residues 107 to 116 (TQSQRTTQPT). Over residues 122 to 136 (SYSTSSSNVHVTTTS) the composition is skewed to low complexity. One can recognise a Peptidase C51 domain in the interval 136–257 (SAPSSNGVSL…SQAASYNYIH (122 aa)).

It localises to the secreted. Not known; immunogenic protein expressed during sepsis and particularly during episodes of infective endocarditis. The protein is Staphylococcal secretory antigen SsaA (ssaA) of Staphylococcus epidermidis.